We begin with the raw amino-acid sequence, 57 residues long: Large ribosomal subunit protein bL32 (57 aa).

The protein belongs to the bacterial ribosomal protein bL32 family.

In Mycolicibacterium gilvum (strain PYR-GCK) (Mycobacterium gilvum (strain PYR-GCK)), this protein is Large ribosomal subunit protein bL32.